The primary structure comprises 199 residues: NADH-quinone oxidoreductase subunit C (199 aa).

It belongs to the complex I 30 kDa subunit family. As to quaternary structure, NDH-1 is composed of 14 different subunits. Subunits NuoB, C, D, E, F, and G constitute the peripheral sector of the complex.

It localises to the cell inner membrane. It catalyses the reaction a quinone + NADH + 5 H(+)(in) = a quinol + NAD(+) + 4 H(+)(out). Its function is as follows. NDH-1 shuttles electrons from NADH, via FMN and iron-sulfur (Fe-S) centers, to quinones in the respiratory chain. The immediate electron acceptor for the enzyme in this species is believed to be ubiquinone. Couples the redox reaction to proton translocation (for every two electrons transferred, four hydrogen ions are translocated across the cytoplasmic membrane), and thus conserves the redox energy in a proton gradient. This Cupriavidus metallidurans (strain ATCC 43123 / DSM 2839 / NBRC 102507 / CH34) (Ralstonia metallidurans) protein is NADH-quinone oxidoreductase subunit C.